The following is a 245-amino-acid chain: Retrovirus-related Pol polyprotein from type-1 retrotransposable element R1 (245 aa).

The Reverse transcriptase domain maps to 1 to 105 (LKDGTGIVAA…VDLETYCNKA (105 aa)). The tract at residues 106–245 (EVRQKFREKE…IVRDDSNLEQ (140 aa)) is nucleic acid-binding endonuclease.

The catalysed reaction is DNA(n) + a 2'-deoxyribonucleoside 5'-triphosphate = DNA(n+1) + diphosphate. This is Retrovirus-related Pol polyprotein from type-1 retrotransposable element R1 from Popillia japonica (Japanese beetle).